Here is a 281-residue protein sequence, read N- to C-terminus: ATP phosphoribosyltransferase (281 aa).

Belongs to the ATP phosphoribosyltransferase family. Long subfamily. Requires Mg(2+) as cofactor.

The protein resides in the cytoplasm. The catalysed reaction is 1-(5-phospho-beta-D-ribosyl)-ATP + diphosphate = 5-phospho-alpha-D-ribose 1-diphosphate + ATP. It participates in amino-acid biosynthesis; L-histidine biosynthesis; L-histidine from 5-phospho-alpha-D-ribose 1-diphosphate: step 1/9. With respect to regulation, feedback inhibited by histidine. Catalyzes the condensation of ATP and 5-phosphoribose 1-diphosphate to form N'-(5'-phosphoribosyl)-ATP (PR-ATP). Has a crucial role in the pathway because the rate of histidine biosynthesis seems to be controlled primarily by regulation of HisG enzymatic activity. This chain is ATP phosphoribosyltransferase, found in Corynebacterium diphtheriae (strain ATCC 700971 / NCTC 13129 / Biotype gravis).